Consider the following 434-residue polypeptide: Trehalose-phosphatase (434 aa).

Residues aspartate 156 and aspartate 158 each contribute to the Mg(2+) site. Aspartate 158 acts as the Proton donor/acceptor in catalysis. Residue 275 to 277 coordinates substrate; the sequence is QKK. Aspartate 366 contributes to the Mg(2+) binding site.

The protein belongs to the gob-1 trehalose phosphatase family. Requires Mg(2+) as cofactor.

It catalyses the reaction alpha,alpha-trehalose 6-phosphate + H2O = alpha,alpha-trehalose + phosphate. Its function is as follows. Catalyzes the hydrolysis of trehalose 6-phosphate to trehalose and phosphate; prevents the accumulation of toxic levels of trehalose 6-phosphate. The chain is Trehalose-phosphatase (gob-1) from Caenorhabditis briggsae.